Reading from the N-terminus, the 501-residue chain is Tetrachloroethene reductive dehalogenase (501 aa).

The tat-type signal signal peptide spans 1–37; that stretch reads MEKKKKPELSRRDFGKLIIGGGAAATIAPFGVPGANA. Residues alanine 74, tyrosine 207, 309-314, 329-332, and 341-343 contribute to the corrinoid site; these read NGVGQS, MGAC, and VRL. The 4Fe-4S ferredoxin-type 1 domain maps to 356 to 386; the sequence is KPIDFGVTEFCETCKKCARECPSKAITEGPR. Residues cysteine 366, cysteine 369, cysteine 372, and cysteine 376 each contribute to the [4Fe-4S] cluster site. 394–401 contributes to the corrinoid binding site; it reads HNQSGKLQ. Cysteine 409 contacts [4Fe-4S] cluster. A corrinoid-binding site is contributed by tyrosine 419. The [4Fe-4S] cluster site is built by cysteine 420, cysteine 423, and cysteine 427. The region spanning 420-439 is the 4Fe-4S ferredoxin-type 2 domain; that stretch reads CGVCVAVCPFTKGNIWIHDG.

Belongs to the PceA family. As to quaternary structure, monomer. [4Fe-4S] cluster is required as a cofactor. Requires corrinoid as cofactor. Post-translationally, predicted to be exported by the Tat system. The position of the signal peptide cleavage has not been experimentally proven.

Its subcellular location is the cytoplasm. The protein resides in the cell inner membrane. It carries out the reaction trichloroethene + chloride + A + H(+) = tetrachloroethene + AH2. The catalysed reaction is trichloroethene + AH2 = (Z)-1,2-dichloroethene + chloride + A + H(+). With respect to regulation, both the processed and unprocessed enzymes are catalytically active. PCE-dependent growth and PceA activity are inhibited in the presence of high concentrations of 5,6-dimethylbenzimidazole (DMB), probably due to the formation a DMB-containing nor-B12 cofactor. Dechlorination of PCE is stimulated by ammonium ions. Activity is inhibited by chlorinated methanes. Its function is as follows. Catalyzes the reductive dechlorination of tetrachloroethene (PCE) to trichloroethene (TCE) and of trichloroethene to cis-1,2-dichloroethene (DCE). In addition, trans-1,3-dichloropropene, 1,1,3-trichloropropene and 2,3-dichloropropene are reduced to a mixture of mono-chloropropenes, 1,1-dichloropropene, and 2-chloropropene, respectively. Is also able to convert brominated phenols such as 4-bromophenol (4-BP), 2,4-dibromophenol (2,4-DBP) and 2,4,6-tribromophenol (2,4,6-TBP). Utilizes formate or pyruvate as electron donors. Titanium(III) citrate could also serve as electron donor. Reduced methyl viologen can act as the artificial electron donor. The sequence is that of Tetrachloroethene reductive dehalogenase from Sulfurospirillum multivorans (Dehalospirillum multivorans).